The following is a 136-amino-acid chain: DUF35 domain-containing scaffold protein (136 aa).

Zn(2+)-binding residues include C25, C38, and C41.

It belongs to the scaffold protein DUF35 family. In terms of assembly, interacts with acetoacetyl-CoA thiolase and HMG-CoA synthase (HMGCS) that catalyzes the first and second step in the mevalonate pathway, respectively.

Functionally, functions as a scaffold to connect the acetoacetyl-CoA thiolase and HMG-CoA synthase (HMGCS) dimers in the channeling thiolase/HMGCS complex, which allows for efficient coupling of the endergonic thiolase reaction with the exergonic HMGCS reaction. This Pyrococcus furiosus (strain ATCC 43587 / DSM 3638 / JCM 8422 / Vc1) protein is DUF35 domain-containing scaffold protein.